The chain runs to 479 residues: Protein ORD (479 aa).

Positions 102–140 are disordered; sequence KEEETEPESESDLDEGPSTSKQALERMVQRAERKAKEAS. Acidic residues predominate over residues 104–116; that stretch reads EETEPESESDLDE. A compositionally biased stretch (basic and acidic residues) spans 124-140; that stretch reads ALERMVQRAERKAKEAS.

As to quaternary structure, interacts with Sce.

Its subcellular location is the nucleus. The protein localises to the chromosome. It is found in the centromere. Essential for proper maintenance of sister-chromatid cohesion in both male and female meiosis. Mutations in ord cause premature separation of the sister chromatids in meiosis I and random segregation in both meiotic divisions. Required for chiasma maintenance in female meiosis. Mutations in ord reduce recombination in female meiosis. This chain is Protein ORD (ord), found in Drosophila melanogaster (Fruit fly).